Here is a 397-residue protein sequence, read N- to C-terminus: Phosphopentomutase (397 aa).

Residues Asp-12, Asp-289, His-294, Asp-330, His-331, and His-342 each coordinate Mn(2+).

Belongs to the phosphopentomutase family. It depends on Mn(2+) as a cofactor.

Its subcellular location is the cytoplasm. The enzyme catalyses 2-deoxy-alpha-D-ribose 1-phosphate = 2-deoxy-D-ribose 5-phosphate. It catalyses the reaction alpha-D-ribose 1-phosphate = D-ribose 5-phosphate. Its pathway is carbohydrate degradation; 2-deoxy-D-ribose 1-phosphate degradation; D-glyceraldehyde 3-phosphate and acetaldehyde from 2-deoxy-alpha-D-ribose 1-phosphate: step 1/2. In terms of biological role, isomerase that catalyzes the conversion of deoxy-ribose 1-phosphate (dRib-1-P) and ribose 1-phosphate (Rib-1-P) to deoxy-ribose 5-phosphate (dRib-5-P) and ribose 5-phosphate (Rib-5-P), respectively. The chain is Phosphopentomutase from Limosilactobacillus reuteri (strain DSM 20016) (Lactobacillus reuteri).